Reading from the N-terminus, the 198-residue chain is Proteasome subunit beta 2 (198 aa).

Residues 1–4 (MVLA) constitute a propeptide, removed in mature form; by autocatalysis. The active-site Nucleophile is the threonine 5.

The protein belongs to the peptidase T1B family. As to quaternary structure, the 20S proteasome core is composed of 14 alpha and 14 beta subunits that assemble into four stacked heptameric rings, resulting in a barrel-shaped structure. The two inner rings, each composed of seven catalytic beta subunits, are sandwiched by two outer rings, each composed of seven alpha subunits. The catalytic chamber with the active sites is on the inside of the barrel. Has a gated structure, the ends of the cylinder being occluded by the N-termini of the alpha-subunits. Is capped at one or both ends by the proteasome regulatory ATPase, PAN.

The protein localises to the cytoplasm. The enzyme catalyses Cleavage of peptide bonds with very broad specificity.. With respect to regulation, the formation of the proteasomal ATPase PAN-20S proteasome complex, via the docking of the C-termini of PAN into the intersubunit pockets in the alpha-rings, triggers opening of the gate for substrate entry. Interconversion between the open-gate and close-gate conformations leads to a dynamic regulation of the 20S proteasome proteolysis activity. In terms of biological role, component of the proteasome core, a large protease complex with broad specificity involved in protein degradation. The polypeptide is Proteasome subunit beta 2 (Korarchaeum cryptofilum (strain OPF8)).